Reading from the N-terminus, the 765-residue chain is 5-methyltetrahydropteroyltriglutamate--homocysteine methyltransferase (765 aa).

5-methyltetrahydropteroyltri-L-glutamate contacts are provided by residues Arg18–Lys21 and Lys114. L-homocysteine is bound by residues Ile437–Ser439 and Glu490. L-methionine is bound by residues Ile437–Ser439 and Glu490. Trp567 serves as a coordination point for 5-methyltetrahydropteroyltri-L-glutamate. Asp605 lines the L-homocysteine pocket. Asp605 provides a ligand contact to L-methionine. Glu611 contacts 5-methyltetrahydropteroyltri-L-glutamate. Residues His647, Cys649, and Glu671 each contribute to the Zn(2+) site. Catalysis depends on His700, which acts as the Proton donor. Cys732 is a binding site for Zn(2+).

It belongs to the vitamin-B12 independent methionine synthase family. The cofactor is Zn(2+).

The catalysed reaction is 5-methyltetrahydropteroyltri-L-glutamate + L-homocysteine = tetrahydropteroyltri-L-glutamate + L-methionine. It functions in the pathway amino-acid biosynthesis; L-methionine biosynthesis via de novo pathway; L-methionine from L-homocysteine (MetE route): step 1/1. Catalyzes the transfer of a methyl group from 5-methyltetrahydrofolate to homocysteine resulting in methionine formation. This Listeria monocytogenes serotype 4b (strain F2365) protein is 5-methyltetrahydropteroyltriglutamate--homocysteine methyltransferase.